We begin with the raw amino-acid sequence, 123 residues long: Cysteine-rich DPF motif domain-containing protein 1 (123 aa).

The segment at 102–123 is disordered; it reads RQDLEKRKAPSKRTPSQPGSRT. Residues 114-123 show a composition bias toward polar residues; the sequence is RTPSQPGSRT.

It belongs to the CDPF1 family.

The chain is Cysteine-rich DPF motif domain-containing protein 1 (CDPF1) from Homo sapiens (Human).